A 224-amino-acid polypeptide reads, in one-letter code: MDQFIKQDETGDLIETGMNVANHFLSAPIQGTNSLSKASIIPGVAPVLIGNPEQKNIQHPTASHQGSKSKGRGSGVRSIIVPPSEAGNGGTQIPEPLFAQTGQGGIVTTVYQDPTIQPTGSYRSVELTKIGKERMINRFVEKPRISTPVTEFKRGAGSGCSRPDNPRGGHRREWSLSWVQGEVRVFEWCNPICSPITAAARFHSCKCGNCPAKCDQCERDYGPP.

Residues 54-65 are compositionally biased toward polar residues; that stretch reads QKNIQHPTASHQ. 2 disordered regions span residues 54–94 and 150–172; these read QKNI…TQIP and TEFK…GHRR. Residues His170, Cys189, Cys193, Cys205, Cys207, Cys210, Cys214, and Cys217 each coordinate Zn(2+).

It belongs to the paramyxoviruses V protein family. As to quaternary structure, interacts with host IFIH1/MDA5 and DHX58/LGP2. Forms with host DDB1, CUL4A, STAT1, STAT2 and STAT3 the mumps virus V-dependent complex (VDC).

The protein resides in the virion. The protein localises to the host cytoplasm. Its function is as follows. Plays an essential role in the inhibition of host immune response. Prevents the establishment of cellular antiviral state by blocking interferon-alpha/beta (IFN-alpha/beta) production and signaling pathway. Interacts with host IFIH1/MDA5 and DHX58/LGP2 to inhibit the transduction pathway involved in the activation of IFN-beta promoter, thus protecting the virus against cell antiviral state. Blocks the type I and II interferon signaling pathways by interacting with host STAT1, STAT2 and STAT3, and mediating their ubiquitination and subsequent proteasomal degradation. The chain is Non-structural protein V from Homo sapiens (Human).